A 259-amino-acid polypeptide reads, in one-letter code: Phosphatidylglycerol--prolipoprotein diacylglyceryl transferase (259 aa).

4 helical membrane passes run 10–30 (IGLLEIRWYSLAYIIGILFAY), 50–70 (IISWWVTGMILGGRIGYILFY), 86–106 (WKGGMSFHGASLGLFCTMYIF), and 112–132 (IKFLSAIDLCLCAVPVGIFLG). R133 lines the a 1,2-diacyl-sn-glycero-3-phospho-(1'-sn-glycerol) pocket. A run of 3 helical transmembrane segments spans residues 169–189 (LYEAFFEGLLLFVVMNLLFFF), 197–217 (GMLFTIFMIWYGIVRFFIEFV), and 227–247 (ILFNWITMGQLLSFIMVILGI).

The protein belongs to the Lgt family.

It localises to the cell inner membrane. The enzyme catalyses L-cysteinyl-[prolipoprotein] + a 1,2-diacyl-sn-glycero-3-phospho-(1'-sn-glycerol) = an S-1,2-diacyl-sn-glyceryl-L-cysteinyl-[prolipoprotein] + sn-glycerol 1-phosphate + H(+). It functions in the pathway protein modification; lipoprotein biosynthesis (diacylglyceryl transfer). In terms of biological role, catalyzes the transfer of the diacylglyceryl group from phosphatidylglycerol to the sulfhydryl group of the N-terminal cysteine of a prolipoprotein, the first step in the formation of mature lipoproteins. This Ehrlichia ruminantium (strain Gardel) protein is Phosphatidylglycerol--prolipoprotein diacylglyceryl transferase.